The following is a 156-amino-acid chain: C-type lectin lectoxin-Phi1 (156 aa).

The N-terminal stretch at 1–23 (MGRFIFVSLGLLVLAFSLSGIGA) is a signal peptide. 3 cysteine pairs are disulfide-bonded: Cys-27–Cys-38, Cys-55–Cys-154, and Cys-129–Cys-146. A C-type lectin domain is found at 34–155 (HNVSCYKLIN…CNRRHRFLCK (122 aa)). 2 N-linked (GlcNAc...) asparagine glycosylation sites follow: Asn-35 and Asn-109. The Mannose-binding motif lies at 119–121 (EPN). Residues Glu-127, Asn-142, and Asp-143 each coordinate Ca(2+).

This sequence belongs to the true venom lectin family. As to expression, expressed by the venom gland.

It localises to the secreted. Mannose-binding lectin which recognizes specific carbohydrate structures and agglutinates a variety of animal cells by binding to cell-surface glycoproteins and glycolipids. May be a calcium-dependent lectin. The chain is C-type lectin lectoxin-Phi1 from Philodryas olfersii (Green snake).